Here is a 556-residue protein sequence, read N- to C-terminus: WD repeat-containing protein srw1 (556 aa).

The interval 1 to 80 (MDEFDGFTRP…NEGDRFIPSR (80 aa)) is disordered. Positions 12-37 (SSNSSANRNSNNSMNRVENNNSNSDS) are enriched in low complexity. The segment covering 43-55 (SRGDAHTRMRQGF) has biased composition (basic and acidic residues). Ser62 carries the phosphoserine modification. Residues 69–78 (RTNEGDRFIP) are compositionally biased toward basic and acidic residues. Thr98 bears the Phosphothreonine mark. Over residues 126 to 146 (TFNNSPIATPNTTIGVSTPRT) the composition is skewed to polar residues. Positions 126–173 (TFNNSPIATPNTTIGVSTPRTDSGIDDIELTQRTPPSSSHTSSSILQN) are disordered. Residues 159 to 169 (TPPSSSHTSSS) are compositionally biased toward low complexity. Phosphothreonine is present on Thr177. Residues Ser187 and Ser214 each carry the phosphoserine modification. WD repeat units follow at residues 246–285 (GLAG…VTVM), 289–328 (YPTD…KTRT), 331–368 (GHTE…HYFR), 372–411 (AHRQ…PLYS), 414–456 (NHIA…MLHN), 458–499 (DTGS…RVGT), and 502–541 (GHTD…SKHS).

The protein belongs to the WD repeat CDC20/Fizzy family. Post-translationally, phosphorylated by cdc2-cdc13-CDK complex. This targets srw1 for proteolysis which in turn promotes cdc13 turnover. Dephosphorylated during G1 arrest.

Its subcellular location is the nucleus. Has a role in cell differentiation and cell cycling by negatively regulating cig2 and cdc12-associated cdc2. Down-regulates the level of cdc13, particularly in a nitrogen deprived environment. Regulator of cell cycle G1 phase progression. Prevents onset of mitosis during the pre-Start G1 period. Required for degradation of cdc13 mitotic cyclin B during G1 arrest but not during mitotic exit. The chain is WD repeat-containing protein srw1 (srw1) from Schizosaccharomyces pombe (strain 972 / ATCC 24843) (Fission yeast).